A 264-amino-acid polypeptide reads, in one-letter code: Indole-3-glycerol phosphate synthase (264 aa).

This sequence belongs to the TrpC family.

The catalysed reaction is 1-(2-carboxyphenylamino)-1-deoxy-D-ribulose 5-phosphate + H(+) = (1S,2R)-1-C-(indol-3-yl)glycerol 3-phosphate + CO2 + H2O. It participates in amino-acid biosynthesis; L-tryptophan biosynthesis; L-tryptophan from chorismate: step 4/5. The sequence is that of Indole-3-glycerol phosphate synthase from Carboxydothermus hydrogenoformans (strain ATCC BAA-161 / DSM 6008 / Z-2901).